The chain runs to 300 residues: tRNA pseudouridine synthase A (300 aa).

Asp-67 serves as the catalytic Nucleophile. A substrate-binding site is contributed by Tyr-125.

This sequence belongs to the tRNA pseudouridine synthase TruA family. In terms of assembly, homodimer.

The catalysed reaction is uridine(38/39/40) in tRNA = pseudouridine(38/39/40) in tRNA. Its function is as follows. Formation of pseudouridine at positions 38, 39 and 40 in the anticodon stem and loop of transfer RNAs. The protein is tRNA pseudouridine synthase A of Synechococcus sp. (strain CC9902).